Reading from the N-terminus, the 208-residue chain is FMN-dependent NADH:quinone oxidoreductase (208 aa).

FMN-binding positions include 17-19 (SNS), 99-102 (MWNL), and 143-146 (SRGG).

It belongs to the azoreductase type 1 family. As to quaternary structure, homodimer. FMN serves as cofactor.

The catalysed reaction is 2 a quinone + NADH + H(+) = 2 a 1,4-benzosemiquinone + NAD(+). The enzyme catalyses N,N-dimethyl-1,4-phenylenediamine + anthranilate + 2 NAD(+) = 2-(4-dimethylaminophenyl)diazenylbenzoate + 2 NADH + 2 H(+). Functionally, quinone reductase that provides resistance to thiol-specific stress caused by electrophilic quinones. In terms of biological role, also exhibits azoreductase activity. Catalyzes the reductive cleavage of the azo bond in aromatic azo compounds to the corresponding amines. The protein is FMN-dependent NADH:quinone oxidoreductase of Staphylococcus aureus (strain Mu50 / ATCC 700699).